The following is a 300-amino-acid chain: Tyrosine recombinase XerD (300 aa).

Positions 6 to 89 (LFHKRLIEQF…ALKVFFHFLK (84 aa)) constitute a Core-binding (CB) domain. A Tyr recombinase domain is found at 108 to 293 (RLPSILSTEE…ASESLIEKFH (186 aa)). Catalysis depends on residues Arg152, Lys174, His245, Arg248, and His271. The active-site O-(3'-phospho-DNA)-tyrosine intermediate is Tyr280.

Belongs to the 'phage' integrase family. XerD subfamily. In terms of assembly, forms a cyclic heterotetrameric complex composed of two molecules of XerC and two molecules of XerD.

The protein resides in the cytoplasm. Functionally, site-specific tyrosine recombinase, which acts by catalyzing the cutting and rejoining of the recombining DNA molecules. The XerC-XerD complex is essential to convert dimers of the bacterial chromosome into monomers to permit their segregation at cell division. It also contributes to the segregational stability of plasmids. In Chlamydia trachomatis serovar D (strain ATCC VR-885 / DSM 19411 / UW-3/Cx), this protein is Tyrosine recombinase XerD.